A 187-amino-acid chain; its full sequence is MICGTDEAGRGPIAGPVVAAAVILDPDNPIEGLNDSKKLSEKKREKLSLEIKEKALYWAIAQSDPDEIEAINILWASMKAMQRAVEALPVKPDMVLVDGNRVPELKVPAKAIVGGDASEQCIAAASILAKVERDRQMLKWHELYPQYEFDKHKAYGTPKHLELLEKHGPCPIHRKGFNPVKRLLANL.

Residues 1–187 (MICGTDEAGR…NPVKRLLANL (187 aa)) enclose the RNase H type-2 domain. A divalent metal cation-binding residues include Asp-6, Glu-7, and Asp-98.

Belongs to the RNase HII family. The cofactor is Mn(2+). Mg(2+) is required as a cofactor.

It localises to the cytoplasm. The enzyme catalyses Endonucleolytic cleavage to 5'-phosphomonoester.. Endonuclease that specifically degrades the RNA of RNA-DNA hybrids. The protein is Ribonuclease HII of Idiomarina loihiensis (strain ATCC BAA-735 / DSM 15497 / L2-TR).